Here is a 115-residue protein sequence, read N- to C-terminus: MDKTQKGKFFEDKAVRYLESIGYKVLHKNYRSKYGEIDIIAETDNVIVFVEVKGRFTENFGSGEESITKKKIDKIVKTALQFIEENNLQGKDFRFDVVALKGNQIFHLENAFSLE.

The protein belongs to the UPF0102 family.

This chain is UPF0102 protein SYO3AOP1_0546, found in Sulfurihydrogenibium sp. (strain YO3AOP1).